We begin with the raw amino-acid sequence, 430 residues long: Alpha-(1-&gt;3)-arabinofuranosyltransferase (430 aa).

10 consecutive transmembrane segments (helical) span residues 26–46 (APSTATVLRSVLWPIAILSVI), 114–134 (WYISFNVLAFLIAAYLMLRIF), 136–156 (YTLSSVAAPALVLAMFCTESV), 160–180 (LVFTNINGCMLLGAVLFFRWL), 194–214 (AIGLTLVVKPSLAPLLLLPVL), 218–238 (FYTLITAFGVPLVFNIAAWPL), 276–296 (WLILLLRVVFLLLAVGSLWLL), 307–327 (FWLLTSSGVLLTASFLLLSLG), 352–372 (WPAWLAIYGFMTMDRWLLGHW), and 381–401 (YMKITYGWSLMLVVVFCVLYF).

Belongs to the glycosyltransferase 87 family.

The protein localises to the cell membrane. The enzyme catalyses Adds an alpha-D-arabinofuranosyl group from trans,octacis-decaprenylphospho-beta-D-arabinofuranose at the 3-O-position of an alpha-(1-&gt;5)-arabinofuranan chain attached to a beta-(1-&gt;5)-galactofuranan chain.. It functions in the pathway cell wall biogenesis; cell wall polysaccharide biosynthesis. Involved in the biosynthesis of the arabinogalactan (AG) region of the mycolylarabinogalactan-peptidoglycan (mAGP) complex, an essential component of the mycobacterial cell wall. Catalyzes the addition of an arabinofuranosyl (Araf) residue from the sugar donor beta-D-arabinofuranosyl-1-monophosphoryldecaprenol (DPA) on the C-3 of an alpha-(1-&gt;5)-linked Araf from the arabinan backbone of AG. This is Alpha-(1-&gt;3)-arabinofuranosyltransferase (aftC) from Mycolicibacterium smegmatis (strain ATCC 700084 / mc(2)155) (Mycobacterium smegmatis).